Reading from the N-terminus, the 447-residue chain is N-succinylarginine dihydrolase (447 aa).

Substrate is bound by residues 19 to 28, N110, and 137 to 138; these read AGLSFGNEAS and HR. E174 is a catalytic residue. Residue R213 coordinates substrate. H249 is a catalytic residue. Positions 251 and 364 each coordinate substrate. The Nucleophile role is filled by C370.

The protein belongs to the succinylarginine dihydrolase family. Homodimer.

The enzyme catalyses N(2)-succinyl-L-arginine + 2 H2O + 2 H(+) = N(2)-succinyl-L-ornithine + 2 NH4(+) + CO2. The protein operates within amino-acid degradation; L-arginine degradation via AST pathway; L-glutamate and succinate from L-arginine: step 2/5. Its function is as follows. Catalyzes the hydrolysis of N(2)-succinylarginine into N(2)-succinylornithine, ammonia and CO(2). This chain is N-succinylarginine dihydrolase, found in Yersinia pseudotuberculosis serotype O:1b (strain IP 31758).